The primary structure comprises 700 residues: Methionine--tRNA ligase (700 aa).

Positions 13-23 (PYANGDIHLGH) match the 'HIGH' region motif. Residues Cys-144, Cys-147, Cys-157, and Cys-160 each contribute to the Zn(2+) site. The 'KMSKS' region signature appears at 341-345 (KMSKS). Lys-344 serves as a coordination point for ATP. Residues 598-700 (DFAKVEMKVA…DNCVIGDLLA (103 aa)) enclose the tRNA-binding domain.

Belongs to the class-I aminoacyl-tRNA synthetase family. MetG type 1 subfamily. As to quaternary structure, homodimer. Requires Zn(2+) as cofactor.

Its subcellular location is the cytoplasm. It carries out the reaction tRNA(Met) + L-methionine + ATP = L-methionyl-tRNA(Met) + AMP + diphosphate. In terms of biological role, is required not only for elongation of protein synthesis but also for the initiation of all mRNA translation through initiator tRNA(fMet) aminoacylation. In Psychrobacter arcticus (strain DSM 17307 / VKM B-2377 / 273-4), this protein is Methionine--tRNA ligase.